A 401-amino-acid chain; its full sequence is Phosphoglycerate kinase (401 aa).

Substrate-binding positions include 26–28 (DFN), Arg41, 64–67 (HLGK), Arg125, and Arg158. ATP is bound by residues Lys209, Gly300, Glu331, and 357–360 (GGDS).

The protein belongs to the phosphoglycerate kinase family. Monomer.

It localises to the cytoplasm. It carries out the reaction (2R)-3-phosphoglycerate + ATP = (2R)-3-phospho-glyceroyl phosphate + ADP. The protein operates within carbohydrate degradation; glycolysis; pyruvate from D-glyceraldehyde 3-phosphate: step 2/5. This chain is Phosphoglycerate kinase, found in Clostridium tetani (strain Massachusetts / E88).